The chain runs to 358 residues: MIRVTRLLEVKDLAISFKTYGGEVQAIRGVNFHLDKGETLAIVGESGSGKSVTSQAIMKLIPMPPGYFKRGEILFEGKDLVPLSEKEMQNVRGKEIGMIFQDPMTSLNPTMKVGKQITEVLFKHEKISKEAAKKRAVELLELVGIPMPEKRVNQFPHEFSGGMRQRVVIAMALAANPKLLIADEPTTALDVTIQAQILELMKDLQKKIDTSIIFITHDLGVVANVADRVAVMYAGQIVETGTVDEIFYDPRHPYTWGLLASMPTLESSGEEELTAIPGTPPDLTNPPKGDAFALRSSYAMKIDFEQEPPMFKVSDTHYVKSWLLHPDAPKVEPPEAVKAKMRKLANTFEKPVLVREVE.

Positions 8-259 (LEVKDLAISF…PRHPYTWGLL (252 aa)) constitute an ABC transporter domain. 44 to 51 (GESGSGKS) contacts ATP.

Belongs to the ABC transporter superfamily. The complex is composed of two ATP-binding proteins (OppD and OppF), two transmembrane proteins (OppB and OppC) and a solute-binding protein (OppA).

The protein resides in the cell membrane. The catalysed reaction is a [peptide](out) + ATP + H2O = a [peptide](in) + ADP + phosphate + H(+). Part of the ABC transporter complex OppABCDF involved in the uptake of oligopeptides. Probably responsible for energy coupling to the transport system. Required for sporulation and genetic competence. In Bacillus subtilis (strain 168), this protein is Oligopeptide transport ATP-binding protein OppD.